A 365-amino-acid chain; its full sequence is 1-aminocyclopropane-1-carboxylate oxidase homolog 9 (365 aa).

The Fe2OG dioxygenase domain maps to 214–313 (KGLLMLCHYY…RISVACFVSS (100 aa)). 3 residues coordinate Fe cation: histidine 238, aspartate 240, and histidine 294. Arginine 304 is a 2-oxoglutarate binding site.

Belongs to the iron/ascorbate-dependent oxidoreductase family. Fe(2+) serves as cofactor.

This is 1-aminocyclopropane-1-carboxylate oxidase homolog 9 from Arabidopsis thaliana (Mouse-ear cress).